The following is a 972-amino-acid chain: Translation initiation factor IF-2 (972 aa).

The span at 48–63 (DHLRKSHGATDGDKRK) shows a compositional bias: basic and acidic residues. Disordered regions lie at residues 48 to 85 (DHLR…KART) and 99 to 385 (RDDV…QAPT). The span at 105 to 114 (GAEQGQAQVA) shows a compositional bias: low complexity. Positions 121-181 (ELKRREEEAR…EEEAAAKRVA (61 aa)) are enriched in basic and acidic residues. Positions 182-205 (AEAAAAQQQAAAQQAAAAEQQEAA) are enriched in low complexity. The segment covering 212-263 (DEARAAAERAAQREAAKKAEDAAREAADKARAEQEEISKRRAAAEAEARAIR) has biased composition (basic and acidic residues). Residues 279-288 (PPKPVEPPKP) are compositionally biased toward pro residues. Residues 313–328 (PAGAAAPATTAPAGAG) are compositionally biased toward low complexity. A compositionally biased stretch (gly residues) spans 357 to 370 (SSGGVDRGWRGGPK). The 170-residue stretch at 472 to 641 (PRPPVVTVMG…LLQAEVLELK (170 aa)) folds into the tr-type G domain. Residues 481–488 (GHVDHGKT) form a G1 region. Residue 481-488 (GHVDHGKT) coordinates GTP. The G2 stretch occupies residues 506–510 (GITQH). The interval 527–530 (DTPG) is G3. Residues 527-531 (DTPGH) and 581-584 (NKID) contribute to the GTP site. The interval 581–584 (NKID) is G4. The interval 617–619 (SAK) is G5.

The protein belongs to the TRAFAC class translation factor GTPase superfamily. Classic translation factor GTPase family. IF-2 subfamily.

The protein localises to the cytoplasm. In terms of biological role, one of the essential components for the initiation of protein synthesis. Protects formylmethionyl-tRNA from spontaneous hydrolysis and promotes its binding to the 30S ribosomal subunits. Also involved in the hydrolysis of GTP during the formation of the 70S ribosomal complex. In Burkholderia lata (strain ATCC 17760 / DSM 23089 / LMG 22485 / NCIMB 9086 / R18194 / 383), this protein is Translation initiation factor IF-2.